A 98-amino-acid polypeptide reads, in one-letter code: NADH-ubiquinone oxidoreductase chain 4L (98 aa).

Transmembrane regions (helical) follow at residues 1-21 (MPYI…GTLM), 29-49 (SLLC…LLSL), and 61-81 (LILL…LVMI).

It belongs to the complex I subunit 4L family. Core subunit of respiratory chain NADH dehydrogenase (Complex I) which is composed of 45 different subunits.

The protein resides in the mitochondrion inner membrane. It carries out the reaction a ubiquinone + NADH + 5 H(+)(in) = a ubiquinol + NAD(+) + 4 H(+)(out). Functionally, core subunit of the mitochondrial membrane respiratory chain NADH dehydrogenase (Complex I) which catalyzes electron transfer from NADH through the respiratory chain, using ubiquinone as an electron acceptor. Part of the enzyme membrane arm which is embedded in the lipid bilayer and involved in proton translocation. This is NADH-ubiquinone oxidoreductase chain 4L (MT-ND4L) from Elephas maximus (Indian elephant).